Here is a 270-residue protein sequence, read N- to C-terminus: Regulatory protein RecX (270 aa).

This sequence belongs to the RecX family.

The protein resides in the cytoplasm. Its function is as follows. Modulates RecA activity. The polypeptide is Regulatory protein RecX (Bacillus mycoides (strain KBAB4) (Bacillus weihenstephanensis)).